Reading from the N-terminus, the 258-residue chain is Imidazole glycerol phosphate synthase subunit HisF (258 aa).

Catalysis depends on residues Asp11 and Asp130.

This sequence belongs to the HisA/HisF family. Heterodimer of HisH and HisF.

It is found in the cytoplasm. It carries out the reaction 5-[(5-phospho-1-deoxy-D-ribulos-1-ylimino)methylamino]-1-(5-phospho-beta-D-ribosyl)imidazole-4-carboxamide + L-glutamine = D-erythro-1-(imidazol-4-yl)glycerol 3-phosphate + 5-amino-1-(5-phospho-beta-D-ribosyl)imidazole-4-carboxamide + L-glutamate + H(+). The protein operates within amino-acid biosynthesis; L-histidine biosynthesis; L-histidine from 5-phospho-alpha-D-ribose 1-diphosphate: step 5/9. Functionally, IGPS catalyzes the conversion of PRFAR and glutamine to IGP, AICAR and glutamate. The HisF subunit catalyzes the cyclization activity that produces IGP and AICAR from PRFAR using the ammonia provided by the HisH subunit. The protein is Imidazole glycerol phosphate synthase subunit HisF of Bradyrhizobium sp. (strain ORS 278).